The primary structure comprises 346 residues: Olfactory receptor 8G5 (346 aa).

The Extracellular portion of the chain corresponds to 1-60 (MIIYKQGITFLQKENNNTIHLNTMFFLSPAETHQRMAAENHSFVTKFILVGLTEKSELQL). Residues Asn16 and Asn40 are each glycosylated (N-linked (GlcNAc...) asparagine). A helical transmembrane segment spans residues 61–81 (PLFLVFLGIYVVTVLGNLGMI). The Cytoplasmic portion of the chain corresponds to 82–89 (TLIGLSSH). Residues 90 to 110 (LHTPMYCFLSSLSFIDFCHST) form a helical membrane-spanning segment. Residues 111-134 (VITPKMLVNFVTEKNIISYPECMT) lie on the Extracellular side of the membrane. The cysteines at positions 132 and 214 are disulfide-linked. Residues 135-155 (QLYFFLVFAIAECHMLAAMAY) form a helical membrane-spanning segment. The Cytoplasmic segment spans residues 156-174 (DGYVAICSPLLYSIIISNK). A helical transmembrane segment spans residues 175-195 (ACFSLILVVYVIGLICASAHI). Topologically, residues 196 to 232 (GCMFRVQFCKFDVINHYFCDLISILKLSCSSTYINEL) are extracellular. The helical transmembrane segment at 233 to 252 (LILIFSGINILVPSLTILSS) threads the bilayer. The Cytoplasmic portion of the chain corresponds to 253–272 (YIFIIASILRIRYTEGRSKA). The chain crosses the membrane as a helical span at residues 273–293 (FSTCSSHISAVSVFFGSAAFM). The Extracellular segment spans residues 294-306 (YLQPSSVSSMDQG). A helical membrane pass occupies residues 307 to 327 (KVSSVFYTIVVPMLNPLIYSL). Residues 328–346 (RNKDVHVALKKTLGKRTFL) lie on the Cytoplasmic side of the membrane.

This sequence belongs to the G-protein coupled receptor 1 family.

It is found in the cell membrane. Its function is as follows. Odorant receptor. This Homo sapiens (Human) protein is Olfactory receptor 8G5 (OR8G5).